We begin with the raw amino-acid sequence, 200 residues long: Cytochrome c biogenesis ATP-binding export protein CcmA (200 aa).

The 198-residue stretch at 3 to 200 (LSGRGLRCVR…AREMRIGAAA (198 aa)) folds into the ABC transporter domain. Position 35-42 (35-42 (GHNGAGKT)) interacts with ATP.

It belongs to the ABC transporter superfamily. CcmA exporter (TC 3.A.1.107) family. In terms of assembly, the complex is composed of two ATP-binding proteins (CcmA) and two transmembrane proteins (CcmB).

The protein resides in the cell inner membrane. It catalyses the reaction heme b(in) + ATP + H2O = heme b(out) + ADP + phosphate + H(+). Its function is as follows. Part of the ABC transporter complex CcmAB involved in the biogenesis of c-type cytochromes; once thought to export heme, this seems not to be the case, but its exact role is uncertain. Responsible for energy coupling to the transport system. In Rhodopseudomonas palustris (strain BisB5), this protein is Cytochrome c biogenesis ATP-binding export protein CcmA.